A 310-amino-acid chain; its full sequence is Ribosomal RNA small subunit methyltransferase H (310 aa).

Residues 32–34, Asp52, Phe79, Asp100, and Gln107 contribute to the S-adenosyl-L-methionine site; that span reads GGH.

The protein belongs to the methyltransferase superfamily. RsmH family.

Its subcellular location is the cytoplasm. It carries out the reaction cytidine(1402) in 16S rRNA + S-adenosyl-L-methionine = N(4)-methylcytidine(1402) in 16S rRNA + S-adenosyl-L-homocysteine + H(+). Its function is as follows. Specifically methylates the N4 position of cytidine in position 1402 (C1402) of 16S rRNA. The protein is Ribosomal RNA small subunit methyltransferase H of Bacillus cereus (strain G9842).